The following is a 456-amino-acid chain: Bifunctional protein GlmU (456 aa).

The pyrophosphorylase stretch occupies residues 1 to 228; the sequence is MPQNTLNIVI…SHLAAGVNNK (228 aa). Residues 11–14, lysine 25, glutamine 75, 80–81, 102–104, glycine 138, glutamate 153, asparagine 168, and asparagine 226 each bind UDP-N-acetyl-alpha-D-glucosamine; these read LAAG, GT, and YGD. Aspartate 104 is a binding site for Mg(2+). Residue asparagine 226 coordinates Mg(2+). The segment at 229-249 is linker; sequence LQLAELERIFQTEQAQELLKA. An N-acetyltransferase region spans residues 250–456; sequence GVTLRDPARF…GWVRPEKNKQ (207 aa). The UDP-N-acetyl-alpha-D-glucosamine site is built by arginine 332 and lysine 350. Histidine 362 serves as the catalytic Proton acceptor. UDP-N-acetyl-alpha-D-glucosamine is bound by residues tyrosine 365 and asparagine 376. Acetyl-CoA contacts are provided by residues alanine 379, 385 to 386, serine 404, alanine 422, and arginine 439; that span reads NY.

The protein in the N-terminal section; belongs to the N-acetylglucosamine-1-phosphate uridyltransferase family. It in the C-terminal section; belongs to the transferase hexapeptide repeat family. In terms of assembly, homotrimer. Requires Mg(2+) as cofactor.

Its subcellular location is the cytoplasm. The enzyme catalyses alpha-D-glucosamine 1-phosphate + acetyl-CoA = N-acetyl-alpha-D-glucosamine 1-phosphate + CoA + H(+). The catalysed reaction is N-acetyl-alpha-D-glucosamine 1-phosphate + UTP + H(+) = UDP-N-acetyl-alpha-D-glucosamine + diphosphate. It functions in the pathway nucleotide-sugar biosynthesis; UDP-N-acetyl-alpha-D-glucosamine biosynthesis; N-acetyl-alpha-D-glucosamine 1-phosphate from alpha-D-glucosamine 6-phosphate (route II): step 2/2. It participates in nucleotide-sugar biosynthesis; UDP-N-acetyl-alpha-D-glucosamine biosynthesis; UDP-N-acetyl-alpha-D-glucosamine from N-acetyl-alpha-D-glucosamine 1-phosphate: step 1/1. Its pathway is bacterial outer membrane biogenesis; LPS lipid A biosynthesis. Its function is as follows. Catalyzes the last two sequential reactions in the de novo biosynthetic pathway for UDP-N-acetylglucosamine (UDP-GlcNAc). The C-terminal domain catalyzes the transfer of acetyl group from acetyl coenzyme A to glucosamine-1-phosphate (GlcN-1-P) to produce N-acetylglucosamine-1-phosphate (GlcNAc-1-P), which is converted into UDP-GlcNAc by the transfer of uridine 5-monophosphate (from uridine 5-triphosphate), a reaction catalyzed by the N-terminal domain. The sequence is that of Bifunctional protein GlmU from Neisseria meningitidis serogroup A / serotype 4A (strain DSM 15465 / Z2491).